The following is a 570-amino-acid chain: Hydroxylamine reductase (570 aa).

Residues Cys5, Cys8, Cys17, and Cys23 each coordinate [4Fe-4S] cluster. Residues His266, Glu290, Cys334, Cys425, Cys453, Cys478, Glu513, and Lys515 each coordinate hybrid [4Fe-2O-2S] cluster. Cys425 bears the Cysteine persulfide mark.

It belongs to the HCP family. It depends on [4Fe-4S] cluster as a cofactor. The cofactor is hybrid [4Fe-2O-2S] cluster.

It localises to the cytoplasm. The enzyme catalyses A + NH4(+) + H2O = hydroxylamine + AH2 + H(+). Catalyzes the reduction of hydroxylamine to form NH(3) and H(2)O. The protein is Hydroxylamine reductase of Clostridium botulinum (strain 657 / Type Ba4).